Reading from the N-terminus, the 518-residue chain is 2-isopropylmalate synthase (518 aa).

Positions 5 to 267 constitute a Pyruvate carboxyltransferase domain; that stretch reads VIIFDTTLRD…STKIKHKEIY (263 aa). Mn(2+) contacts are provided by Asp-14, His-202, His-204, and Asn-238. The regulatory domain stretch occupies residues 392 to 518; it reads SLSFFSVQSI…KLKKLKKINN (127 aa).

This sequence belongs to the alpha-IPM synthase/homocitrate synthase family. LeuA type 1 subfamily. As to quaternary structure, homodimer. Mn(2+) serves as cofactor.

It localises to the cytoplasm. It carries out the reaction 3-methyl-2-oxobutanoate + acetyl-CoA + H2O = (2S)-2-isopropylmalate + CoA + H(+). It participates in amino-acid biosynthesis; L-leucine biosynthesis; L-leucine from 3-methyl-2-oxobutanoate: step 1/4. Functionally, catalyzes the condensation of the acetyl group of acetyl-CoA with 3-methyl-2-oxobutanoate (2-ketoisovalerate) to form 3-carboxy-3-hydroxy-4-methylpentanoate (2-isopropylmalate). In Buchnera aphidicola subsp. Rhopalosiphum padi, this protein is 2-isopropylmalate synthase.